The sequence spans 249 residues: Acidic leucine-rich nuclear phosphoprotein 32 family member A (249 aa).

Residue threonine 15 is modified to Phosphothreonine. Serine 17 is modified (phosphoserine). LRR repeat units lie at residues 18 to 38, 43 to 64, 65 to 87, and 89 to 110; these read DVKE…EGLT, ELEF…PKLN, KLKK…AEKC, and NLTH…EPLK. The region spanning 123–161 is the LRRCT domain; that stretch reads CEVTNLNDYRENVFKLLPQLTYLDGYDRDDKEAPDSDAE. Over residues 147-156 the composition is skewed to basic and acidic residues; that stretch reads GYDRDDKEAP. The tract at residues 147–249 is disordered; that stretch reads GYDRDDKEAP…EPEDEGEDDD (103 aa). The tract at residues 150–174 is necessary for tumor-suppressive function; the sequence is RDDKEAPDSDAEGYVEGLDDDEEDE. Over residues 157 to 230 the composition is skewed to acidic residues; the sequence is DSDAEGYVEG…DEEDEEELGE (74 aa). Residues serine 158 and serine 204 each carry the phosphoserine modification. The segment at 165–249 is interaction with E4F1; it reads EGLDDDEEDE…EPEDEGEDDD (85 aa).

The protein belongs to the ANP32 family. In terms of assembly, component of the SET complex, composed of at least ANP32A, APEX1, HMGB2, NME1, SET and TREX1. Directly interacts with SET. Interacts with ATXN1/SCA1. Interacts with MAP1B. Interacts with ELAVL1. Part of the INHAT (inhibitor of histone acetyltransferases) complex. Interacts with E4F1. The N-terminus is blocked. In terms of processing, phosphorylated on serine residues, at least in part by casein kinase 2/CK2. Post-translationally, some glutamate residues are glycylated by TTLL8. This modification occurs exclusively on glutamate residues and results in a glycine chain on the gamma-carboxyl group. Widely distributed in the central nervous system, with an abundant expression in the cerebellum.

It is found in the nucleus. Its subcellular location is the cytoplasm. It localises to the endoplasmic reticulum. Multifunctional protein that is involved in the regulation of many processes including tumor suppression, apoptosis, cell cycle progression or transcription. Promotes apoptosis by favouring the activation of caspase-9/CASP9 and allowing apoptosome formation. In addition, plays a role in the modulation of histone acetylation and transcription as part of the INHAT (inhibitor of histone acetyltransferases) complex. Inhibits the histone-acetyltranferase activity of EP300/CREBBP (CREB-binding protein) and EP300/CREBBP-associated factor by histone masking. Preferentially binds to unmodified histone H3 and sterically inhibiting its acetylation and phosphorylation leading to cell growth inhibition. Participates in other biochemical processes such as regulation of mRNA nuclear-to-cytoplasmic translocation and stability by its association with ELAVL1 (Hu-antigen R). Plays a role in E4F1-mediated transcriptional repression as well as inhibition of protein phosphatase 2A. This Bos taurus (Bovine) protein is Acidic leucine-rich nuclear phosphoprotein 32 family member A (ANP32A).